The following is a 1099-amino-acid chain: R3H domain-containing protein 1 (1099 aa).

Residues Ser111–Thr146 form a disordered region. Residues Phe112 to Ser142 show a composition bias toward basic and acidic residues. The 64-residue stretch at Arg168–Thr231 folds into the R3H domain. 2 positions are modified to phosphoserine: Ser187 and Ser262. Residues Arg232 to Ser302 enclose the SUZ domain. Positions Asp267–Glu287 are disordered. Ser302 is modified (phosphoserine). Positions Arg331–Arg370 are disordered. 2 stretches are compositionally biased toward polar residues: residues Gly338–Glu349 and Trp360–Arg370. Phosphoserine occurs at positions 380, 381, and 393. Disordered stretches follow at residues Val387 to Gly439, Gln490 to His537, Tyr583 to Ser625, and Glu797 to Pro825. The span at Gly391–Ser422 shows a compositional bias: low complexity. Pro residues-rich tracts occupy residues Pro519–Gln532 and Ala588–Pro611. The segment covering Glu797–Gln817 has biased composition (polar residues). At Arg929 the chain carries Asymmetric dimethylarginine; alternate. Residue Arg929 is modified to Omega-N-methylarginine; alternate. The disordered stretch occupies residues Pro941 to Gly977. The span at His960 to Lys969 shows a compositional bias: basic residues. Ser973 is subject to Phosphoserine.

In Homo sapiens (Human), this protein is R3H domain-containing protein 1 (R3HDM1).